The following is a 100-amino-acid chain: MELTPREKDKLLLFTAALLAERRLARGLKLNYPESVALISAFIMEGARDGKSVAALMEEGRHVLSREQVMEGIPEMIPDIQVEATFPDGSKLVTVHNPII.

This sequence belongs to the urease gamma subunit family. Heterotrimer of UreA (gamma), UreB (beta) and UreC (alpha) subunits. Three heterotrimers associate to form the active enzyme.

The protein localises to the cytoplasm. The catalysed reaction is urea + 2 H2O + H(+) = hydrogencarbonate + 2 NH4(+). Its pathway is nitrogen metabolism; urea degradation; CO(2) and NH(3) from urea (urease route): step 1/1. This chain is Urease subunit gamma, found in Escherichia coli O157:H7 (strain EC4115 / EHEC).